The following is a 263-amino-acid chain: Purine nucleoside phosphorylase SERP0752 (263 aa).

Zn(2+) contacts are provided by His-79, Cys-124, and His-141.

Belongs to the purine nucleoside phosphorylase YfiH/LACC1 family. Homodimer. Cu(2+) serves as cofactor. The cofactor is Zn(2+).

The catalysed reaction is adenosine + phosphate = alpha-D-ribose 1-phosphate + adenine. It carries out the reaction S-methyl-5'-thioadenosine + phosphate = 5-(methylsulfanyl)-alpha-D-ribose 1-phosphate + adenine. The enzyme catalyses inosine + phosphate = alpha-D-ribose 1-phosphate + hypoxanthine. It catalyses the reaction adenosine + H2O + H(+) = inosine + NH4(+). Functionally, purine nucleoside enzyme that catalyzes the phosphorolysis of adenosine and inosine nucleosides, yielding D-ribose 1-phosphate and the respective free bases, adenine and hypoxanthine. Also catalyzes the phosphorolysis of S-methyl-5'-thioadenosine into adenine and S-methyl-5-thio-alpha-D-ribose 1-phosphate. Also has adenosine deaminase activity. The sequence is that of Purine nucleoside phosphorylase SERP0752 from Staphylococcus epidermidis (strain ATCC 35984 / DSM 28319 / BCRC 17069 / CCUG 31568 / BM 3577 / RP62A).